Consider the following 893-residue polypeptide: Beta-adaptin-like protein C (893 aa).

Residues 593-621 are disordered; it reads TEDEDYVEGSETGYPEASGNPVDGAASPS.

Belongs to the adaptor complexes large subunit family. In terms of assembly, adaptor protein complexes are heterotetramers composed of two large adaptins (beta-type subunit and alpha-type or delta-type or epsilon-type or gamma-type subunit), a medium adaptin (mu-type subunit) and a small adaptin (sigma-type subunit).

Its subcellular location is the golgi apparatus. The protein resides in the trans-Golgi network. It localises to the cytoplasmic vesicle. It is found in the clathrin-coated vesicle membrane. Its function is as follows. Subunit of clathrin-associated adaptor protein complex that plays a role in protein sorting in the late-Golgi/trans-Golgi network (TGN) and/or endosomes. The AP complexes mediate both the recruitment of clathrin to membranes and the recognition of sorting signals within the cytosolic tails of transmembrane cargo molecules. The sequence is that of Beta-adaptin-like protein C (BETAC-AD) from Arabidopsis thaliana (Mouse-ear cress).